The primary structure comprises 312 residues: DNA-directed RNA polymerase subunit alpha (312 aa).

The alpha N-terminal domain (alpha-NTD) stretch occupies residues 1–229 (MLQYQIDRID…ELFQPLATVT (229 aa)). The alpha C-terminal domain (alpha-CTD) stretch occupies residues 240–312 (PSPEAQIPLE…ISIPQSRTSV (73 aa)).

It belongs to the RNA polymerase alpha chain family. In cyanobacteria the RNAP catalytic core is composed of 2 alpha, 1 beta, 1 beta', 1 gamma and 1 omega subunit. When a sigma factor is associated with the core the holoenzyme is formed, which can initiate transcription.

The enzyme catalyses RNA(n) + a ribonucleoside 5'-triphosphate = RNA(n+1) + diphosphate. Functionally, DNA-dependent RNA polymerase catalyzes the transcription of DNA into RNA using the four ribonucleoside triphosphates as substrates. The polypeptide is DNA-directed RNA polymerase subunit alpha (Prochlorococcus marinus (strain AS9601)).